Consider the following 357-residue polypeptide: Phenylalanine--tRNA ligase alpha subunit (357 aa).

Position 258 (E258) interacts with Mg(2+).

Belongs to the class-II aminoacyl-tRNA synthetase family. Phe-tRNA synthetase alpha subunit type 1 subfamily. As to quaternary structure, tetramer of two alpha and two beta subunits. Mg(2+) is required as a cofactor.

It localises to the cytoplasm. It catalyses the reaction tRNA(Phe) + L-phenylalanine + ATP = L-phenylalanyl-tRNA(Phe) + AMP + diphosphate + H(+). This Caulobacter vibrioides (strain ATCC 19089 / CIP 103742 / CB 15) (Caulobacter crescentus) protein is Phenylalanine--tRNA ligase alpha subunit.